We begin with the raw amino-acid sequence, 1068 residues long: Huntingtin-interacting protein 1-related protein (1068 aa).

Met1 bears the N-acetylmethionine mark. Residues Glu23–Pro151 enclose the ENTH domain. The stretch at Gly346–Asp644 forms a coiled coil. The disordered stretch occupies residues Glu582–Gln610. Residues Ser592–Gln608 show a composition bias toward basic and acidic residues. An I/LWEQ domain is found at Ser771–Ala1012. Residues Arg867–Lys924 form an important for actin binding region. The disordered stretch occupies residues Leu1011–Tyr1068.

Belongs to the SLA2 family. As to quaternary structure, homodimer. Interacts with actin; homodimerization promotes actin binding. Interacts with CLTB. Interacts with HIP1. Interacts (via ENTH and I/LWEQ domains) with BCL2L10. Widely expressed. Expressed at lower levels in skeletal muscle and heart. The level of expression does not change appreciably during development.

It localises to the cytoplasm. Its subcellular location is the perinuclear region. The protein resides in the endomembrane system. It is found in the cytoplasmic vesicle. The protein localises to the clathrin-coated vesicle membrane. Its function is as follows. Component of clathrin-coated pits and vesicles, that may link the endocytic machinery to the actin cytoskeleton. Binds 3-phosphoinositides (via ENTH domain). May act through the ENTH domain to promote cell survival by stabilizing receptor tyrosine kinases following ligand-induced endocytosis. The sequence is that of Huntingtin-interacting protein 1-related protein (Hip1r) from Mus musculus (Mouse).